We begin with the raw amino-acid sequence, 212 residues long: Molybdenum cofactor guanylyltransferase (212 aa).

Residues 14–16 (LAG), lysine 27, asparagine 55, aspartate 73, and aspartate 108 each bind GTP. Aspartate 108 lines the Mg(2+) pocket.

It belongs to the MobA family. Monomer. Mg(2+) is required as a cofactor.

Its subcellular location is the cytoplasm. It carries out the reaction Mo-molybdopterin + GTP + H(+) = Mo-molybdopterin guanine dinucleotide + diphosphate. Functionally, transfers a GMP moiety from GTP to Mo-molybdopterin (Mo-MPT) cofactor (Moco or molybdenum cofactor) to form Mo-molybdopterin guanine dinucleotide (Mo-MGD) cofactor. The polypeptide is Molybdenum cofactor guanylyltransferase (Bradyrhizobium sp. (strain ORS 278)).